We begin with the raw amino-acid sequence, 556 residues long: MKTDIDIAQSITLKPITEIVEKVGISFDDIELYGKYKAKLSFDKINAVKDNAPGKLILVTAINPTPAGEGKSTITIGLADALSKIGKKTMIALREPSLGPVMGIKGGAAGGGYAQVLPMEDINLHFTGDMHAITTANNALSALIDNHIHQGNVIGIDQRRIIWKRVVDLNDRALRKVTVGLGGPLNGIPREDGFDITVASEIMAILCLATDINDLKERLANIVIGYRFDCSPVYVRDLAVEGALTLILKDAIKPNLVQTIYGTPAFVHGGPFANIAHGCNSVLATTTALRLADYTVTEAGFGADLGAEKFLDIKVPNLPKAPDAVVIVATLRALKMHGGVAKTELSAENVEAVKAGFSNLKRHVENIRKYGIPAVVAINEFVSDTAAEIAVLKELCAAIGVPVELASVWANGADGGVELAETVVATIDNQAASYQRLYKSEDSLEEKVTKIVTQIYGGTGVVFEKKARNQLTEFAKNGWDKLPVCMAKTQYSFSDDQFALGAPTDFDITVREFVPKLGAGFIVALTGDVMTMPGLPKAPVALNMDVAADGTAIGLF.

65 to 72 (TPAGEGKS) provides a ligand contact to ATP.

This sequence belongs to the formate--tetrahydrofolate ligase family.

It carries out the reaction (6S)-5,6,7,8-tetrahydrofolate + formate + ATP = (6R)-10-formyltetrahydrofolate + ADP + phosphate. It participates in one-carbon metabolism; tetrahydrofolate interconversion. The polypeptide is Formate--tetrahydrofolate ligase (Streptococcus suis (strain 98HAH33)).